The primary structure comprises 308 residues: Acetyl-coenzyme A carboxylase carboxyl transferase subunit beta 1 (308 aa).

The CoA carboxyltransferase N-terminal domain occupies 25–294; that stretch reads VWTKCTSCEQ…PLVVSVNESP (270 aa). Zn(2+) contacts are provided by C29, C32, C48, and C51. The C4-type zinc finger occupies 29 to 51; the sequence is CTSCEQVLYHAELERNLEVCPKC. The tract at residues 288 to 308 is disordered; sequence VSVNESPNEEPYSVPEVDEKG.

This sequence belongs to the AccD/PCCB family. Acetyl-CoA carboxylase is a heterohexamer composed of biotin carboxyl carrier protein (AccB), biotin carboxylase (AccC) and two subunits each of ACCase subunit alpha (AccA) and ACCase subunit beta (AccD). Zn(2+) is required as a cofactor.

It localises to the cytoplasm. The enzyme catalyses N(6)-carboxybiotinyl-L-lysyl-[protein] + acetyl-CoA = N(6)-biotinyl-L-lysyl-[protein] + malonyl-CoA. Its pathway is lipid metabolism; malonyl-CoA biosynthesis; malonyl-CoA from acetyl-CoA: step 1/1. Component of the acetyl coenzyme A carboxylase (ACC) complex. Biotin carboxylase (BC) catalyzes the carboxylation of biotin on its carrier protein (BCCP) and then the CO(2) group is transferred by the transcarboxylase to acetyl-CoA to form malonyl-CoA. The protein is Acetyl-coenzyme A carboxylase carboxyl transferase subunit beta 1 of Vibrio parahaemolyticus serotype O3:K6 (strain RIMD 2210633).